A 479-amino-acid chain; its full sequence is Anaerobic nitric oxide reductase flavorubredoxin (479 aa).

Positions 30–210 are zinc metallo-hydrolase; sequence LRGSSYNSYL…PFSRLVTPKI (181 aa). The Fe cation site is built by histidine 79, glutamate 81, aspartate 83, histidine 147, aspartate 166, and histidine 227. Residues 254–393 form the Flavodoxin-like domain; sequence ITIFYDTMSN…LCREHGREIA (140 aa). Residues 260 to 264 and 342 to 369 contribute to the FMN site; these read TMSNN and AFGS…EMSL. Residues 423 to 474 form the Rubredoxin-like domain; it reads GPRMQCSVCQWIYDPAKGEPMQDVAPGTPWSEVPDNFLCPECSLGKDVFDEL. Positions 428, 431, 461, and 464 each coordinate Fe cation.

This sequence in the N-terminal section; belongs to the zinc metallo-hydrolase group 3 family. In terms of assembly, homotetramer. Requires Fe cation as cofactor. It depends on FMN as a cofactor.

The protein localises to the cytoplasm. It functions in the pathway nitrogen metabolism; nitric oxide reduction. In terms of biological role, anaerobic nitric oxide reductase; uses NADH to detoxify nitric oxide (NO), protecting several 4Fe-4S NO-sensitive enzymes. Has at least 2 reductase partners, only one of which (NorW, flavorubredoxin reductase) has been identified. NO probably binds to the di-iron center; electrons enter from the NorW at rubredoxin and are transferred sequentially to the FMN center and the di-iron center. Also able to function as an aerobic oxygen reductase. This is Anaerobic nitric oxide reductase flavorubredoxin from Shigella sonnei (strain Ss046).